Here is a 272-residue protein sequence, read N- to C-terminus: Lectin-like protein At1g53070 (272 aa).

The signal sequence occupies residues M1–A23. The tract at residues Y24–Q271 is legume-lectin like. 3 N-linked (GlcNAc...) asparagine glycosylation sites follow: N33, N84, and N134. At S241 the chain carries Phosphoserine.

The protein belongs to the leguminous lectin family.

It localises to the secreted. Its subcellular location is the extracellular space. The protein localises to the apoplast. In Arabidopsis thaliana (Mouse-ear cress), this protein is Lectin-like protein At1g53070.